Here is a 300-residue protein sequence, read N- to C-terminus: tRNA dimethylallyltransferase (300 aa).

11-18 lines the ATP pocket; the sequence is GPTAVGKS. A substrate-binding site is contributed by 13-18; the sequence is TAVGKS. Residues 35–38 are interaction with substrate tRNA; sequence DSVQ.

This sequence belongs to the IPP transferase family. As to quaternary structure, monomer. Requires Mg(2+) as cofactor.

It carries out the reaction adenosine(37) in tRNA + dimethylallyl diphosphate = N(6)-dimethylallyladenosine(37) in tRNA + diphosphate. Catalyzes the transfer of a dimethylallyl group onto the adenine at position 37 in tRNAs that read codons beginning with uridine, leading to the formation of N6-(dimethylallyl)adenosine (i(6)A). The polypeptide is tRNA dimethylallyltransferase (Borrelia hermsii (strain HS1 / DAH)).